Here is a 463-residue protein sequence, read N- to C-terminus: Fumarate hydratase class II (463 aa).

Substrate contacts are provided by residues 98–100, 129–132, 139–141, and Thr-187; these read SGT, HPND, and SSN. His-188 serves as the catalytic Proton donor/acceptor. Residue Ser-318 is part of the active site. Residues Ser-319 and 324 to 326 each bind substrate; that span reads KVN.

Belongs to the class-II fumarase/aspartase family. Fumarase subfamily. As to quaternary structure, homotetramer.

Its subcellular location is the cytoplasm. The catalysed reaction is (S)-malate = fumarate + H2O. It participates in carbohydrate metabolism; tricarboxylic acid cycle; (S)-malate from fumarate: step 1/1. In terms of biological role, involved in the TCA cycle. Catalyzes the stereospecific interconversion of fumarate to L-malate. The polypeptide is Fumarate hydratase class II (Rickettsia bellii (strain RML369-C)).